A 223-amino-acid chain; its full sequence is Small ribosomal subunit protein uS3 (223 aa).

Residues 38-106 enclose the KH type-2 domain; the sequence is LKRELKEKLK…EVFIDILEVN (69 aa).

The protein belongs to the universal ribosomal protein uS3 family. As to quaternary structure, part of the 30S ribosomal subunit. Forms a tight complex with proteins S10 and S14.

In terms of biological role, binds the lower part of the 30S subunit head. Binds mRNA in the 70S ribosome, positioning it for translation. This chain is Small ribosomal subunit protein uS3, found in Acidobacterium capsulatum (strain ATCC 51196 / DSM 11244 / BCRC 80197 / JCM 7670 / NBRC 15755 / NCIMB 13165 / 161).